A 600-amino-acid chain; its full sequence is NADH-quinone oxidoreductase subunit C/D (600 aa).

The tract at residues 1–190 (MIDLMPKKNT…EPFFLNEQKE (190 aa)) is NADH dehydrogenase I subunit C. Positions 214–600 (EFMFLNLGPN…IDFVMSDVDR (387 aa)) are NADH dehydrogenase I subunit D.

In the N-terminal section; belongs to the complex I 30 kDa subunit family. This sequence in the C-terminal section; belongs to the complex I 49 kDa subunit family. In terms of assembly, NDH-1 is composed of 13 different subunits. Subunits NuoB, CD, E, F, and G constitute the peripheral sector of the complex.

The protein localises to the cell membrane. The enzyme catalyses a quinone + NADH + 5 H(+)(in) = a quinol + NAD(+) + 4 H(+)(out). Its function is as follows. NDH-1 shuttles electrons from NADH, via FMN and iron-sulfur (Fe-S) centers, to quinones in the respiratory chain. The immediate electron acceptor for the enzyme in this species is believed to be ubiquinone. Couples the redox reaction to proton translocation (for every two electrons transferred, four hydrogen ions are translocated across the cytoplasmic membrane), and thus conserves the redox energy in a proton gradient. The polypeptide is NADH-quinone oxidoreductase subunit C/D (Buchnera aphidicola subsp. Acyrthosiphon pisum (strain 5A)).